A 114-amino-acid polypeptide reads, in one-letter code: Progonadoliberin-2 (114 aa).

The first 24 residues, 1–24, serve as a signal peptide directing secretion; the sequence is MASSRRGLLLLLMLLTAHPGPSEA. Gly-34 bears the Glycine amide mark. Positions 35–59 are disordered; sequence GKRALSSAQDPQNALRPPAGSPAQA.

It belongs to the GnRH family.

The protein resides in the secreted. Functionally, stimulates the secretion of gonadotropins; it stimulates the secretion of both luteinizing and follicle-stimulating hormones. This chain is Progonadoliberin-2 (GNRH2), found in Macaca mulatta (Rhesus macaque).